The sequence spans 277 residues: MSFVKMTGSGNDFVFFDGRTTPIDLVTQPEAIKAICNRYNGIGADGLVVLEPLQEEADVRVHYYNSDGTAADLCGNATLCSTAISAQWGITSASGMRLATGAGLINSRIDGLPAIALQPITDIRPDMPIAPATAQGRRVGFAVAGIPHLVILCEDADAVDVAGAGPALRRHEATGPAGANVNWVSPRPDGSWRYRTFERGVEGETLACGTGAVATAVLLRSWGLSDGATTTIRTSSGRDVEVDLEPLTAPDGRSLEGFRPTLRGEGRVVFRGEIAGL.

Substrate is bound by residues asparagine 11 and asparagine 65. The active-site Proton donor is cysteine 74. Substrate contacts are provided by residues 75-76 (GN), asparagine 180, and 198-199 (ER). The active-site Proton acceptor is the cysteine 208. 209 to 210 (GT) is a binding site for substrate.

Belongs to the diaminopimelate epimerase family. In terms of assembly, homodimer.

The protein resides in the cytoplasm. It catalyses the reaction (2S,6S)-2,6-diaminopimelate = meso-2,6-diaminopimelate. The protein operates within amino-acid biosynthesis; L-lysine biosynthesis via DAP pathway; DL-2,6-diaminopimelate from LL-2,6-diaminopimelate: step 1/1. In terms of biological role, catalyzes the stereoinversion of LL-2,6-diaminopimelate (L,L-DAP) to meso-diaminopimelate (meso-DAP), a precursor of L-lysine and an essential component of the bacterial peptidoglycan. This chain is Diaminopimelate epimerase, found in Gemmatimonas aurantiaca (strain DSM 14586 / JCM 11422 / NBRC 100505 / T-27).